The chain runs to 208 residues: Large ribosomal subunit protein uL3 (208 aa).

At glutamine 149 the chain carries N5-methylglutamine.

This sequence belongs to the universal ribosomal protein uL3 family. Part of the 50S ribosomal subunit. Forms a cluster with proteins L14 and L19. In terms of processing, methylated by PrmB.

One of the primary rRNA binding proteins, it binds directly near the 3'-end of the 23S rRNA, where it nucleates assembly of the 50S subunit. This chain is Large ribosomal subunit protein uL3, found in Haemophilus ducreyi (strain 35000HP / ATCC 700724).